Here is a 911-residue protein sequence, read N- to C-terminus: MFGSIAKALFGSSNDRYVKSLDKIVRQIAAFEPHVQALSDEELAAQTPKFRQMLAEGKTLDDILPEAFATVREASVRALGMRHFDVQMIGGIVLHRGEIAEMRTGEGKTLVATLAVYLNALEGKGVHVVTVNDYLARRDAETMGVLYNFLGLTVGVIVPNLNEEQRREAYNADITYATNNELGFDYLRDNMKHERGQMVHRPFNFAIVDEVDSILIDEARTPLIISGPTDDKSDLYISVDAVVKQIAPDLYEADEKTKNITLTEDGVEWVERAFEDAGLLVGSNLYDVENTMVVHHLDQALKANVMFKRDIDYIVKDGKIVIIDEFTGRMMDGRRWSNGLHQAVEAKEGVKIEPENQTMASITFQNYFRMYPKIAGMTGTAATEAPEFFDIYKMNVVSIPTNVPVQRIDEEDEFYKNTMDKFGAIAKLIRERYENGQPVLVGTVSIEKSELLSEFLQKEGVKHNVLNARFHEMEAHIVAQAGRLGAVTIATNMAGRGTDIQLGGNVEFRIEDELRDVPEGPEREAGIARIRAEVAEEKQKVLAAGGLCVIGTERHESRRIDNQLRGRSGRQGDPGMSKFYLCLEDDLLRIFGPDTLFARMMNSNLADGEAIGSKWLSKAIETAQKKVEARNYDIRKQVVEYDDVMNDQRKVIYEQRADIMDAEAVGDVVTDMRHDTVNAIVGDACPPGSYPEQWDVESLKARVRDVLGIEIPLDDWFQEEAIEPDTIEERIQQLADAHMDTKITEVDASAWRSLEKSILLERLDHHWKEHLATLDALRQVVFLRAYAQKTPINEYKQEAFGLFEKMLDAIREDVTRILMTSEIRLRPVEEFQLPELPDFLTSHIDPFTGENDAAPLAPAPSMFGALPPQAGGALSGGFPDGDPFAGQGISRNAPCPCGSGQKYKHCHGVAA.

ATP contacts are provided by residues Gln-87, 105–109 (GEGKT), and Asp-499. Residues Cys-895, Cys-897, Cys-906, and His-907 each contribute to the Zn(2+) site.

Belongs to the SecA family. In terms of assembly, monomer and homodimer. Part of the essential Sec protein translocation apparatus which comprises SecA, SecYEG and auxiliary proteins SecDF-YajC and YidC. It depends on Zn(2+) as a cofactor.

It localises to the cell inner membrane. Its subcellular location is the cytoplasm. The catalysed reaction is ATP + H2O + cellular proteinSide 1 = ADP + phosphate + cellular proteinSide 2.. Functionally, part of the Sec protein translocase complex. Interacts with the SecYEG preprotein conducting channel. Has a central role in coupling the hydrolysis of ATP to the transfer of proteins into and across the cell membrane, serving both as a receptor for the preprotein-SecB complex and as an ATP-driven molecular motor driving the stepwise translocation of polypeptide chains across the membrane. The chain is Protein translocase subunit SecA from Novosphingobium aromaticivorans (strain ATCC 700278 / DSM 12444 / CCUG 56034 / CIP 105152 / NBRC 16084 / F199).